The sequence spans 84 residues: M-zodatoxin-Lt2b (84 aa).

A signal peptide spans 1–22; that stretch reads MKYFVIALALAVALVCIAESTA. Positions 23 to 58 are excised as a propeptide; that stretch reads YEVNEELENELDDLDDAAWLAVAEELQGLEDFEESR. A Processing quadruplet motif motif is present at residues 55-58; that stretch reads EESR.

Cleavage of the propeptide depends on the processing quadruplet motif (XXXR, with at least one of X being E). As to expression, expressed by the venom gland.

It localises to the secreted. Has antimicrobial activity against both Gram-positive and Gram-negative bacteria, and yeasts. Also has a strong hemolytic activity against rabbit erythrocytes. Causes paralysis, but is not lethal when injected into insect (M.domestica) larvae. In Lachesana tarabaevi (Spider), this protein is M-zodatoxin-Lt2b.